Consider the following 12345-residue polypeptide: Muscle-specific protein 300 kDa (12345 aa).

Disordered stretches follow at residues 1–68 (MADS…STVT) and 121–152 (WSDGSSPVKRPAEQSSDELRLTDDQDEYDAEN). Topologically, residues 1–12295 (MADSGGPGSK…GARFLGRVAR (12295 aa)) are cytoplasmic. The span at 19-28 (AGGGGAGAAG) shows a compositional bias: gly residues. Basic and acidic residues predominate over residues 45 to 60 (EQKSSREQVLEEEKSQ). One copy of the LRR 1 repeat lies at 249 to 273 (FKELENFLEGERTVREVPSADGVRT). 3 disordered regions span residues 295–325 (EGYVSPRDSPSWSRSSYSSERSSVTPPRSVD), 387–488 (TVQV…RKLI), and 504–526 (GKSNASDNDIDIDNDSDTEGRPA). Positions 299–321 (SPRDSPSWSRSSYSSERSSVTPP) are enriched in low complexity. Polar residues-rich tracts occupy residues 387–404 (TVQVGGGNRTSPQDSTPQ) and 414–434 (TTKTMLTSTPIGTKEQPQTGP). Over residues 462-484 (TITSTTTKSTSSSTSATSSSSTS) the composition is skewed to low complexity. Residues 511–520 (NDIDIDNDSD) are compositionally biased toward acidic residues. 2 consecutive Calponin-homology (CH) domains span residues 630-737 (RVQK…LYFQ) and 777-882 (QGAR…HKYP). One copy of the LRR 2 repeat lies at 823 to 847 (LVNLAELKKTSNRQRLETAFDVAES). The stretch at 919–952 (SSFPRDFGEYLLARSEVDAHLAAYNRLKQLIESQ) is one TPR 1 repeat. LRR repeat units lie at residues 1089-1112 (CCLIAFLNLVENKMRGWTGKYGHE), 1389-1411 (HLFHQLQIQQESLEAGQKEIHQW), and 1616-1642 (LKDVEKELQLEQQALNRNEDVDSILQR). The stretch at 1603 to 1636 (LEFRLDENAFYQSLKDVEKELQLEQQALNRNEDV) is one TPR 2 repeat. Residues 1903–1935 (TGWNQAYTETSDKLQALKGTQAVWSEFVDQKND) form an HAT 1 repeat. LRR repeat units follow at residues 2087–2109 (KQLDLLAADASELAPKEGNIAEA) and 2558–2581 (QQQIQQMTVRKDKFHALEHNFGQA). Residues 2109-2233 (AKRLKGEITK…SRWTAVHENA (125 aa)) enclose the Calponin-homology (CH) 3 domain. Residues 2663-2696 (ADRIQKYNLISQALREYADSKDKFSKELKKAEDL) form a TPR 3 repeat. The segment at 2699-2724 (AIPQQPRDETELHQASEKTRKTMEQL) is disordered. A compositionally biased stretch (basic and acidic residues) spans 2704 to 2724 (PRDETELHQASEKTRKTMEQL). 3 LRR repeats span residues 2728-2751 (KLSLDELERRGNNVGKLFSAIGEP), 2935-2959 (CRALRGELDNSGNEIDNIKQKVDEL), and 3030-3053 (SSDKYNLDVKKSSLQEVSKSIDDC). The stretch at 2894–2962 (EQELRRRSKE…KQKVDELRNL (69 aa)) forms a coiled coil. One copy of the Spectrin 1 repeat lies at 3110-3207 (LWSQYEQSNE…AVSKALTSYI (98 aa)). The stretch at 3346–3379 (KAKVPTTDELYPTLATKKAALQNYKTQLQEITLH) is one TPR 4 repeat. LRR repeat units follow at residues 3370-3393 (KTQLQEITLHKNALKQLHDKAVTL), 3437-3462 (LEKAQDWLNTIKSEAIDILNETTFEK), 3530-3556 (LVKLKQLCSKWDEFDTIIEELDNWMKN), and 3611-3634 (NLKLSRLNTRYQTLKNLCKESIAK). The Spectrin 2 repeat unit spans residues 3539-3633 (KWDEFDTIIE…LKNLCKESIA (95 aa)). Residues 3629 to 3662 (KESIAKYVNYVKDHESFDKDFDSFKQNLQSSVDE) form a TPR 5 repeat. The HAT 2 repeat unit spans residues 3706–3739 (KLYGHTSPEGREIIRQQLRALRTLWDNYTDDLNS). The stretch at 3748–3771 (LLQFNEFSIAQDQLTKWLKDVDKA) is one LRR 15 repeat. The stretch at 4177-4273 (SYQDILNQTV…YDQVGQDCAK (97 aa)) is one Spectrin 3 repeat. A TPR 6 repeat occupies 4360–4393 (EVMARDLANLHADFEKFGASLSDVKSGLENRLQQ). An HAT 3 repeat occupies 4371–4403 (ADFEKFGASLSDVKSGLENRLQQWNDYEINLDR). Residues 4611-4701 (FDEIADSLKS…GKLQKRAQNY (91 aa)) form a Spectrin 4 repeat. 2 LRR repeats span residues 4654–4676 (NDINNHQVELGNLQEIAANLPEK) and 4742–4763 (EQISLHTNLDRLKNLKASLADE). The HAT 4 repeat unit spans residues 4799–4830 (EWESLLTTISSTIEAIEARLQHWSEYEQLRDQ). The Spectrin 5 repeat unit spans residues 4820-4919 (HWSEYEQLRD…VKELNNRWQQ (100 aa)). The LRR 18 repeat unit spans residues 4839–4863 (DNNLHAIDLKEDLPKKRAQLDALKA). One copy of the HAT 5 repeat lies at 4894–4926 (ASGPELVTKYQQIFHKVKELNNRWQQYVTSHED). LRR repeat units follow at residues 5266–5289 (QIDILVKNHKLNLCPNLPEKEKQV) and 5333–5357 (SSVYQVQVNLAKDVLKKVETNRDQH). The TPR 7 repeat unit spans residues 5645-5678 (SAEPEDCEIIEQEVALLQEEFDAYREALNKAKDY). 3 LRR repeats span residues 5761–5784 (SNAIMQLTTKYNALLTLAKEVMRR), 5820–5843 (PGTLNEVQIKLNTVKNLRQGFETG), and 5979–6002 (TKFDDLQTQVNKIIESLENQVNSH). A Spectrin 6 repeat occupies 5791–5895 (EHQQHHSLYE…DLNDVRQKLA (105 aa)). An HAT 6 repeat occupies 6088 to 6120 (SEWETLQTISRDARSSLESCLAAWQTFLQKFNK). Spectrin repeat units lie at residues 6321–6405 (RWND…DKLK) and 6424–6530 (AYHQ…RLLE). Coiled coils occupy residues 6356-6397 (MKTL…VNRL) and 6454-6484 (REQTQEQIKQHEALLVEIQKYQTNLDDLNAK). An LRR 24 repeat occupies 6363–6387 (YKTLSNELKLKGNELEQLQSEARDL). Residues 6522-6555 (VQIKNRLLESLAKFQEYEDTLDSIMRNLETYEPI) form a TPR 8 repeat. LRR repeat units lie at residues 6531–6554 (SLAKFQEYEDTLDSIMRNLETYEP) and 6560–6587 (LDAPATSLELAQNQLRCAQEMQNKLNNE). Residues 6567-6597 (LELAQNQLRCAQEMQNKLNNEKSRLAAAVQA) adopt a coiled-coil conformation. The tract at residues 6631-6657 (EDLLDQKPPPKTRSSTGGVSTDDDKDE) is disordered. The stretch at 6660-6695 (VEIQVELSDVNEALLDPIAHERVKNYRRIVRLNSAH) is one TPR 9 repeat. An LRR 27 repeat occupies 7004-7026 (SALRNLNTENRNLSGVLKAELDR). The stretch at 7161 to 7195 (EMETATEGELRTTSLPVLEEQLAHYKKLLSDAENK) is one TPR 10 repeat. LRR repeat units lie at residues 7219 to 7242 (LKLNDDIKNMKDRYGRIKNTIDDR), 7300 to 7318 (KELKDSKSKMGDMQMDDLP), 7319 to 7339 (ELQSILAQQDDMIKLIEDQLA), and 7340 to 7361 (HLRQLLLLREQFIALINEIIAF). The stretch at 7419–7457 (KNSITEQLQSLKNQLQNLRKAVESQRQKHQLQLESHKKM) forms a coiled coil. The stretch at 7524 to 7547 (SSLLEMLSEGRSLVASLPHELEER) is one LRR 32 repeat. An HAT 7 repeat occupies 7644-7676 (TKLTNTLANAKTQQSELEKEAERWREYQQSIDR). One copy of the TPR 11 repeat lies at 7654 to 7687 (KTQQSELEKEAERWREYQQSIDRVKATIERTKFV). LRR repeat units lie at residues 7692-7714 (QNLAGLHFNIQKLSHAIGNVQSQ), 7752-7777 (QDLVRSLEQRRDNLQQLAEHWDGFEN), and 7816-7840 (LREESNQLKSSHKEIEALSKSILTF). One copy of the TPR 12 repeat lies at 7759 to 7792 (EQRRDNLQQLAEHWDGFENSLHAWEKALGRLEDK). The stretch at 7799–7935 (TVRSRRHLED…NSQVQQAAEE (137 aa)) forms a coiled coil. Residues 7878-7911 (SKDLEEIEQVFRRISQLQDKLNALHEQLQSVHVY) form a TPR 13 repeat. LRR repeat units follow at residues 8178-8201 (KISVEAVLLERNSLLQEACEEWDQ), 8238-8264 (EKTLADINVQKTKLRLSIEKLEVHFRN), 8298-8321 (EQTLAQIDVYQQQMQSLRQRIIQE), and 8354-8377 (DELLQSLSSVEDGIANMNQSSLDG). Residues 8431-8464 (QQGITMIANAMHGQKKRQQEIDEYQQHLLELEQW) form a TPR 14 repeat. One copy of the LRR 40 repeat lies at 8534-8557 (EQLQSIITILREQVTVATKRIFTI). Disordered regions lie at residues 8583-8616 (IKPPTEAPASPEAHESIESNENTIDSSSMPEEEI), 8966-9023 (QKPT…LPAP), 9131-9158 (EFEPQSPHEESTKSDLVKPQETEPQVVA), 9361-9459 (GKES…PDSD), 9502-9735 (LVED…TSIS), and 9769-9797 (TMQLPKQEKKSKKDKKKKQKNVPEVEQQL). The segment covering 8601–8611 (SNENTIDSSSM) has biased composition (polar residues). The span at 8982 to 9011 (TQVTTTTRTTTATTQEQEQPEQQTQPTTTE) shows a compositional bias: low complexity. Positions 9136–9151 (SPHEESTKSDLVKPQE) are enriched in basic and acidic residues. The segment covering 9394 to 9404 (KRRRKKKKRRD) has biased composition (basic residues). Over residues 9410–9419 (ELEQEQETEP) the composition is skewed to acidic residues. The segment covering 9420–9439 (EPVAAVKEPEVSSDVPVSPE) has biased composition (low complexity). Positions 9440–9451 (DSPRDTVRHESI) are enriched in basic and acidic residues. Polar residues-rich tracts occupy residues 9544–9563 (AVQTSLEVQPDNQENESQTL), 9587–9597 (ISTTEIQTDVS), and 9605–9625 (EISSQTTVTTTIEKELQTTPK). Residues 9658 to 9680 (TSEQSTVTETTTTTETHVQTTTP) show a composition bias toward low complexity. Basic and acidic residues predominate over residues 9681-9698 (EPREQTEVIKPETAHEET). An LRR 41 repeat occupies 9699-9721 (STVELVQFADGEMQTTPPGDQQP). A compositionally biased stretch (polar residues) spans 9711–9735 (MQTTPPGDQQPASLDDSSLTATSIS). Over residues 9777–9788 (KKSKKDKKKKQK) the composition is skewed to basic residues. 4 LRR repeats span residues 9995-10019 (SNVLHLATLSEQIKELPTEQRILEV), 10073-10096 (EEKLDNYNQLNDELSTIKQNVVQL), 10252-10276 (KEFTKITVLADKLVESPIVSSSLEQ), and 10353-10376 (RDELQWLQVAQQRVPDLSAVTSAD). Coiled-coil stretches lie at residues 10072–10099 (SEEKLDNYNQLNDELSTIKQNVVQLERQ) and 10172–10257 (LSAK…FTKI). Residues 10231 to 10264 (QAERERVLQLQSLAEEYEQTLKEFTKITVLADKL) form a TPR 15 repeat. The HAT 8 repeat unit spans residues 10426–10458 (IVLLKLREEVALYLHRLLVFKEIWVQYEQQTDK). LRR repeat units follow at residues 10512–10535 (EKSLQVIPLADEMLQRQFHAQLED), 10570–10593 (ERELQEIYLTMTSMKGVIKNEEEL), and 10644–10667 (AEELEGASVLRDQLQAIQEGISNQ). One copy of the TPR 16 repeat lies at 10854–10888 (VVAWNDTSENLQQLRTRYQRAVELWDKYRNASAAV). The stretch at 10855–10887 (VAWNDTSENLQQLRTRYQRAVELWDKYRNASAA) is one HAT 9 repeat. LRR repeat units follow at residues 10907-10929 (DALQHAKVCQDNLTTQNDRILEL) and 11021-11043 (AHLQTLARTEEQLRQLKERHQNS). The stretch at 11016–11046 (LAALRAHLQTLARTEEQLRQLKERHQNSEVA) forms a coiled coil. An HAT 10 repeat occupies 11070–11104 (DTFQEYHRLSTRLARSQNSSEALRLWRQYLQHVQS). A TPR 17 repeat occupies 11072–11105 (FQEYHRLSTRLARSQNSSEALRLWRQYLQHVQSF). An LRR 51 repeat occupies 11197-11222 (EAERNALQLRYIHLKRVPHLKHRLDA). Coiled coils occupy residues 11220–11247 (LDAMIQQLDQGEQQSKALQEQQQELARH) and 11281–11308 (LQRVTQLSESYEQRVNQLQQEFGAAQKL). LRR repeat units lie at residues 11342-11365 (SALESLTVTQEELKECISPHDMKT), 11398-11422 (LSNYQIRYDRISQWLQRLEQRVEKD), 11670-11692 (EELESQSVNLRQLEQIYAKLAMS), 11697-11720 (PENIQKLTLPTKVMVSMWRQLTPR), and 11744-11766 (EATNSLNAIQKALEQLPSAENQQ). Positions 11655-11685 (KHKLEERQMELRAKLEELESQSVNLRQLEQI) form a coiled coil. The stretch at 11776-11806 (LQRLESLEKKLQDAQQHVQQADNLAQEAKTR) forms a coiled coil. The HAT 11 repeat unit spans residues 11804 to 11836 (KTRTKQQPQLKQLLELVSAYTTLWQTVQTRIVT). LRR repeat units lie at residues 11959 to 11981 (DTVAELTLRFDTLQSQWKARQQH) and 12198 to 12220 (SRLTDLRLRLQSLRRLSGIYIVK). A disordered region spans residues 12253–12272 (SMQAAAPNTENANNTDGGDA). Low complexity predominate over residues 12256-12267 (AAAPNTENANNT). The region spanning 12287 to 12345 (ARFLGRVARASLPIQALMLLLLGVATLVPHGEDYTCMFSNTFARSLEPMLSYPHGPPPT) is the KASH domain. A helical; Anchor for type IV membrane protein membrane pass occupies residues 12296–12316 (ASLPIQALMLLLLGVATLVPH). The stretch at 12301–12323 (QALMLLLLGVATLVPHGEDYTCM) is one LRR 59 repeat. At 12317–12345 (GEDYTCMFSNTFARSLEPMLSYPHGPPPT) the chain is on the perinuclear space side.

Belongs to the nesprin family. In terms of assembly, core component of LINC complexes which are composed of inner nuclear membrane SUN domain-containing proteins coupled to outer nuclear membrane KASH domain-containing nesprins. Interacts with klar; this interaction allows the anchoring of the Msp300 nuclear ring structure to the nuclear envelope. Interacts with sls; this interaction mediates the recruitment of Msp300 to the Z-disks.

It is found in the nucleus membrane. Its subcellular location is the cytoplasm. The protein localises to the myofibril. It localises to the sarcomere. The protein resides in the z line. It is found in the cytoskeleton. Its subcellular location is the microtubule organizing center. The protein localises to the perinuclear region. In terms of biological role, component of the LINC (LInker of Nucleoskeleton and Cytoskeleton) complex involved in the connection between the nuclear lamina and the cytoskeleton. Collaborates with Klar to promote even spacing of the myonuclei at the periphery of striated muscle fibers by mediating a tight association between a nuclear ring structure of Msp300 and the plus ends of a unique astral MT network. In addition, is essential for anchoring nuclei, mitochondria and endoplasmic reticulum (ER) structures to the Z-disks. In fat body cells, part of perinuclear non-centrosomal microtubule-organizing centers (ncMTOCs) which function to accommodate the organization of microtubule (MT) networks to control nuclear positioning and dynein motor-based retrograde endosomal trafficking. Functions as the primary organizer of the ncMTOC by recruiting Patronin, shot and msps to the organizing centre. Within the ncMTOC, Msp300 and shot anchors the ncMTOC at the nuclear surface and recruits the MT minus-end regulators Patronin and Nin for assembly, anchoring and/or stabilization of circumferential and radial MTs at the ncMTOCs. Patronin, and perhaps Nin, recruits msps to the ncMTOC for the gamma-tubulin-independent elongation of radial MTs. In Drosophila melanogaster (Fruit fly), this protein is Muscle-specific protein 300 kDa.